Here is a 387-residue protein sequence, read N- to C-terminus: Alpha-sarcoglycan (387 aa).

Positions 1–24 are cleaved as a signal peptide; the sequence is MAAAALLWLPLLVGCLAGPGGTEA. The Extracellular portion of the chain corresponds to 25-290; the sequence is QQTTLYPLVG…ATARDFLADA (266 aa). Residues N174 and N246 are each glycosylated (N-linked (GlcNAc...) asparagine). The helical transmembrane segment at 291 to 311 threads the bilayer; sequence LVTLLVPLLVALLLALLLAYI. At 312–387 the chain is on the cytoplasmic side; sequence MCCRREGRLK…AQVPLILDQH (76 aa). S377 carries the phosphoserine modification.

It belongs to the sarcoglycan alpha/epsilon family. In terms of assembly, cross-link to form 2 major subcomplexes: one consisting of SGCB, SGCD and SGCG and the other consisting of SGCB and SGCD. The association between SGCB and SGCG is particularly strong while SGCA is loosely associated with the other sarcoglycans. Interacts with the syntrophin SNTA1.

It localises to the cell membrane. The protein localises to the sarcolemma. It is found in the cytoplasm. Its subcellular location is the cytoskeleton. Component of the sarcoglycan complex, a subcomplex of the dystrophin-glycoprotein complex which forms a link between the F-actin cytoskeleton and the extracellular matrix. This chain is Alpha-sarcoglycan (SGCA), found in Oryctolagus cuniculus (Rabbit).